The primary structure comprises 192 residues: Thymidylate kinase (192 aa).

7–14 (GIDCVGKS) is an ATP binding site.

It belongs to the thymidylate kinase family.

The catalysed reaction is dTMP + ATP = dTDP + ADP. In terms of biological role, phosphorylation of dTMP to form dTDP in both de novo and salvage pathways of dTTP synthesis. The protein is Thymidylate kinase of Campylobacter jejuni subsp. jejuni serotype O:23/36 (strain 81-176).